Here is a 988-residue protein sequence, read N- to C-terminus: Transposase for transposon Tn1546 (988 aa).

The protein belongs to the transposase 7 family.

In terms of biological role, required for transposition of transposon Tn1546. The sequence is that of Transposase for transposon Tn1546 from Enterococcus faecium (Streptococcus faecium).